Consider the following 630-residue polypeptide: GATA-type transcription factor SRE1 (630 aa).

2 disordered regions span residues 1–139 (MTGL…TPLW) and 162–203 (DRPT…RLTD). Composition is skewed to polar residues over residues 66-82 (DNTQ…QLQN), 115-133 (KAQS…NCGT), and 175-196 (YGSS…TNDG). The GATA-type 1 zinc-finger motif lies at 128–152 (CSNCGTKRTPLWRRSPTGATICNAC). Residues 219–237 (CPGGGSCNGTGGAEGCDGC) are cystein-rich region (CRR). The segment at 256–283 (HTPRTSPQVSTQGGPGSTEGDAGSSNPE) is disordered. Over residues 258-267 (PRTSPQVSTQ) the composition is skewed to polar residues. Residues 291-315 (CQNCQTTVTPLWRRDENGHPICNAC) form a GATA-type 2 zinc finger. Residues 339–609 (KRVVPAMREQ…AKAERRARLQ (271 aa)) are disordered. Over residues 349–363 (SPPSATQSSNGSVSP) the composition is skewed to polar residues. 2 stretches are compositionally biased toward low complexity: residues 436 to 447 (NNHNNGETTNTH) and 492 to 503 (SSSSASFPNNNP). The segment covering 504–513 (GRFNSISSLL) has biased composition (polar residues). Residues 558 to 568 (SHSPPRFSPSL) show a composition bias toward low complexity. Residues 595–609 (VDHRDAKAERRARLQ) show a composition bias toward basic and acidic residues. Residues 595-630 (VDHRDAKAERRARLQREAQDMREALKAKERELALLE) are a coiled coil.

Its subcellular location is the nucleus. Functionally, GATA-type transcription repressor that regulates iron- acquisition genes through specific binding the GATA sequence element 5'-(G/A)ATC(T/A)GATAA-3' of target promoters in an iron- and zinc-dependent manner. Regulation occurs via direct binding of iron ions. Iron acquisition regulation is critical for survival under both iron-limiting conditions (to acquire essential iron) and iron-replete conditions (to limit iron toxicity). SRE1 targets include genes encoding a number of key iron-regulated factors such as those involved in siderophore biosynthesis, presumed ferric reductase activity, iron-responsive transcriptional regulation, oxidative stress response, as well as genes encoding a number of putative oxidoreductases, metabolic and mitochondrial enzymes, superoxide dismutase, and genes previously identified as induced during nitrosative stress. This chain is GATA-type transcription factor SRE1, found in Ajellomyces capsulatus (Darling's disease fungus).